A 352-amino-acid polypeptide reads, in one-letter code: S-norcoclaurine synthase 1 (352 aa).

The 105-residue stretch at 200–304 (KPLRTVFNRE…RLSIAAFHDP (105 aa)) folds into the Fe2OG dioxygenase domain. 3 residues coordinate Fe cation: His-228, Asp-230, and His-285.

Belongs to the iron/ascorbate-dependent oxidoreductase family. As to quaternary structure, monomer. It depends on Fe cation as a cofactor.

The catalysed reaction is (4-hydroxyphenyl)acetaldehyde + dopamine = (S)-norcoclaurine + H2O. Inhibited by O-phenanthroline, but not by EDTA. In terms of biological role, involved in the biosynthesis of the common precursor of all benzylisoquinoline alkaloids such as morphine, sanguinarine, codeine or berberine. Condenses dopamine and phenylacetaldehyde, 3,4-dihydrophenylacetaldehyde or 4-hydroxyphenylacetaldehyde. This chain is S-norcoclaurine synthase 1 (NCS1), found in Coptis japonica (Japanese goldthread).